The chain runs to 380 residues: Succinyl-diaminopimelate desuccinylase (380 aa).

Position 69 (His-69) interacts with Zn(2+). The active site involves Asp-71. Asp-102 is a binding site for Zn(2+). Glu-135 (proton acceptor) is an active-site residue. Residues Glu-136, Glu-164, and His-353 each contribute to the Zn(2+) site.

This sequence belongs to the peptidase M20A family. DapE subfamily. Homodimer. Requires Zn(2+) as cofactor. Co(2+) serves as cofactor.

The enzyme catalyses N-succinyl-(2S,6S)-2,6-diaminopimelate + H2O = (2S,6S)-2,6-diaminopimelate + succinate. It participates in amino-acid biosynthesis; L-lysine biosynthesis via DAP pathway; LL-2,6-diaminopimelate from (S)-tetrahydrodipicolinate (succinylase route): step 3/3. Its function is as follows. Catalyzes the hydrolysis of N-succinyl-L,L-diaminopimelic acid (SDAP), forming succinate and LL-2,6-diaminopimelate (DAP), an intermediate involved in the bacterial biosynthesis of lysine and meso-diaminopimelic acid, an essential component of bacterial cell walls. This is Succinyl-diaminopimelate desuccinylase from Cereibacter sphaeroides (strain ATCC 17025 / ATH 2.4.3) (Rhodobacter sphaeroides).